A 212-amino-acid chain; its full sequence is MECVIGVVGRDFAVVAADTSAVQSILVHKTDEDKVMVLDSHKLMGASGEPGDRVQFTEFIQKNLHLYQFRNNIPLSTAATANFTRGELATALRKNPYYVNVLLAGYDSDVGASLYYIDYIATFHKIEKGAFGYGSYFCLSLMDKLYRPDMSVEEAVDLVDKCIKEIRLRLVVAPQNFIIKIVDKEGAREYARRAYTDSPPEAATSEAATVAA.

The protein belongs to the peptidase T1B family. In terms of assembly, the 26S proteasome consists of a 20S proteasome core and two 19S regulatory subunits. The 20S proteasome core is composed of 28 subunits that are arranged in four stacked rings, resulting in a barrel-shaped structure. The two end rings are each formed by seven alpha subunits, and the two central rings are each formed by seven beta subunits. The catalytic chamber with the active sites is on the inside of the barrel.

The protein resides in the cytoplasm. It is found in the nucleus. Functionally, non-catalytic component of the proteasome, a multicatalytic proteinase complex which is characterized by its ability to cleave peptides with Arg, Phe, Tyr, Leu, and Glu adjacent to the leaving group at neutral or slightly basic pH. The proteasome has an ATP-dependent proteolytic activity. In Oryza sativa subsp. japonica (Rice), this protein is Proteasome subunit beta type-2 (PBD1).